The following is a 1369-amino-acid chain: Serine/threonine-protein kinase SIK3 (1369 aa).

The interval 26 to 55 (LLPPPAAGPPAAPAAVPPAAVPARPTAPAS) is disordered. Pro residues predominate over residues 27–45 (LPPPAAGPPAAPAAVPPAA). Residues 46 to 55 (VPARPTAPAS) are compositionally biased toward low complexity. The Protein kinase domain maps to 66-317 (YEIDRTIGKG…MEQICRHKWM (252 aa)). The residue at position 71 (T71) is a Phosphothreonine. Residues 72–80 (IGKGNFAVV) and K95 each bind ATP. D188 acts as the Proton acceptor in catalysis. Phosphothreonine is present on T221. In terms of domain architecture, UBA spans 344 to 384 (PLNDDVLLAMEDMGLDKERTLQSLRSDAYDHYSAIYSLLCD). T469 carries the post-translational modification Phosphothreonine. A phosphoserine mark is found at S551, S591, S592, S674, and S695. The tract at residues 775–821 (IQPSSPPPNHPSNHLFRQPSNSPPPVSSAMITSHGATSPSQFQGLPS) is disordered. A compositionally biased stretch (polar residues) spans 803–818 (AMITSHGATSPSQFQG). S914 carries the phosphoserine modification. The tract at residues 942–993 (LFSDQSRGSPSSYSPSTGVGFPPTQALKVPPLDQFPTFPPSAQQQPPHYTTS) is disordered. Over residues 944–957 (SDQSRGSPSSYSPS) the composition is skewed to low complexity. Over residues 981–993 (PSAQQQPPHYTTS) the composition is skewed to polar residues. S1026 carries the post-translational modification Phosphoserine. R1034 is modified (omega-N-methylarginine). The segment at 1314–1338 (DEEDEECGVSLGHEHPGLGDGSQHL) is disordered.

It belongs to the protein kinase superfamily. CAMK Ser/Thr protein kinase family. SNF1 subfamily. As to quaternary structure, binds to and is activated by YWHAZ when phosphorylated on Thr-221. Interacts with 14-3-3 proteins. Interacts with HDAC4; this interaction leads to HDAC4 retention in the cytoplasm. Interacts with DEPTOR, MLST8/GbetaL, RICTOR and RPTOR. Mg(2+) serves as cofactor. Phosphorylated at Thr-221 by STK11/LKB1 in complex with STE20-related adapter-alpha (STRADA) pseudo kinase and CAB39. In terms of tissue distribution, expressed in hypertrophic chondrocytes in the growth plate.

The protein resides in the cytoplasm. The catalysed reaction is L-seryl-[protein] + ATP = O-phospho-L-seryl-[protein] + ADP + H(+). It carries out the reaction L-threonyl-[protein] + ATP = O-phospho-L-threonyl-[protein] + ADP + H(+). Its activity is regulated as follows. Activated by phosphorylation on Thr-221. In terms of biological role, positive regulator of mTOR signaling that functions by triggering the degradation of DEPTOR, an mTOR inhibitor. Required for chondrocyte hypertrophy during skeletogenesis. Negatively regulates cAMP signaling pathway possibly by acting on CRTC2/TORC2 and CRTC3/TORC3. Prevents HDAC4 translocation to the nucleus. In Mus musculus (Mouse), this protein is Serine/threonine-protein kinase SIK3 (Sik3).